The primary structure comprises 281 residues: Protein ZAR1-like 1.L (281 aa).

The 3CxxC-type zinc-finger motif lies at 183–267 (QKYGFFHCKN…QELCGRCKGQ (85 aa)).

The protein belongs to the ZAR1 family. In terms of assembly, component of a cytoplasmic ribonucleoprotein complex together with eif4enif1/4E-T and cpeb1. Expressed in oocytes.

The protein localises to the cytoplasm. The protein resides in the cytoplasmic ribonucleoprotein granule. Its function is as follows. mRNA-binding protein required for maternal mRNA storage, translation and degradation during oocyte maturation. Controls timing of meiosis during oogenesis. Probably promotes formation of some phase-separated membraneless compartment that stores maternal mRNAs in oocytes: acts by undergoing liquid-liquid phase separation upon binding to maternal mRNAs. Binds to the 3'-UTR of maternal mRNAs, inhibiting their translation. The protein is Protein ZAR1-like 1.L of Xenopus laevis (African clawed frog).